A 743-amino-acid polypeptide reads, in one-letter code: Polyribonucleotide nucleotidyltransferase (743 aa).

The Mg(2+) site is built by D489 and D495. The KH domain occupies 556–618 (PRIEKMHIGK…PCIDAAIGMI (63 aa)). One can recognise an S1 motif domain in the interval 628–698 (GETYPGKITS…KTGKFKLSRK (71 aa)). Residues 704 to 743 (PEGYVEPQPRERRERREGGREGGRNFERRGGDRDHREPRG) form a disordered region.

The protein belongs to the polyribonucleotide nucleotidyltransferase family. Mg(2+) serves as cofactor.

It localises to the cytoplasm. The enzyme catalyses RNA(n+1) + phosphate = RNA(n) + a ribonucleoside 5'-diphosphate. Functionally, involved in mRNA degradation. Catalyzes the phosphorolysis of single-stranded polyribonucleotides processively in the 3'- to 5'-direction. In Porphyromonas gingivalis (strain ATCC BAA-308 / W83), this protein is Polyribonucleotide nucleotidyltransferase.